Consider the following 467-residue polypeptide: Probable protein phosphatase 2C 55 (467 aa).

One can recognise a PPM-type phosphatase domain in the interval 222–458; the sequence is SCYLPHPDKE…DDITVVVSYV (237 aa). Mn(2+)-binding residues include Asp252, Gly253, Asp383, and Asp449.

It belongs to the PP2C family. Mg(2+) is required as a cofactor. The cofactor is Mn(2+).

It catalyses the reaction O-phospho-L-seryl-[protein] + H2O = L-seryl-[protein] + phosphate. The catalysed reaction is O-phospho-L-threonyl-[protein] + H2O = L-threonyl-[protein] + phosphate. This Arabidopsis thaliana (Mouse-ear cress) protein is Probable protein phosphatase 2C 55.